An 86-amino-acid polypeptide reads, in one-letter code: MeuNaTxbeta-1 (86 aa).

The signal sequence occupies residues 1–20 (MMKIIIFLIVSSLVLIGVKT). An LCN-type CS-alpha/beta domain is found at 21–83 (DNGYLLDKYT…LWHYETNKCN (63 aa)). 4 disulfides stabilise this stretch: Cys32/Cys82, Cys36/Cys57, Cys43/Cys64, and Cys47/Cys66.

As to expression, expressed by the venom gland.

It is found in the secreted. Its function is as follows. Inhibits sodium channels (Nav). Also moderately inhibits human calcium-activated potassium channel KCa1.1/KCNMA1/BK (41.9% decrease at 2 uM toxin concentration). Shows moderate antimicrobial activity against both Gram-positive and -negative bacteria. This chain is MeuNaTxbeta-1, found in Mesobuthus eupeus (Lesser Asian scorpion).